The chain runs to 473 residues: UDP-glycosyltransferase 91D2 (473 aa).

Residue His-26 is the Proton acceptor of the active site. His-26 serves as a coordination point for an anthocyanidin. The Charge relay role is filled by Asp-121. 5 residues coordinate UDP-alpha-D-glucose: Ala-344, Gln-346, His-361, Ser-366, and Glu-369. Gly-384 serves as a coordination point for an anthocyanidin. The UDP-alpha-D-glucose site is built by Asp-385 and Gln-386.

This sequence belongs to the UDP-glycosyltransferase family.

It carries out the reaction steviolmonoside + UDP-alpha-D-glucose = steviolbioside + UDP + H(+). The catalysed reaction is rubusoside + UDP-alpha-D-glucose = stevioside + UDP + H(+). The enzyme catalyses stevioside + UDP-alpha-D-glucose = rebaudioside E + UDP + H(+). It catalyses the reaction rebaudioside A + UDP-alpha-D-glucose = rebaudioside D + UDP + H(+). Its function is as follows. Involved in the biosynthesis of steviol glycosides in leaves. Converts the mono-glycoside steviolmonoside to the bi-glycoside steviolbioside. Converts the bi-glycoside rubusoside to the tri-glycoside stevioside. Converts the tri-glycoside stevioside to the tetra-glycoside rebaudioside E. Converts the tetra-glycoside rebaudioside A to the penta-glycoside rebaudioside E. The polypeptide is UDP-glycosyltransferase 91D2 (Stevia rebaudiana (Stevia)).